The sequence spans 812 residues: Phosphoenolpyruvate synthase (812 aa).

His430 (tele-phosphohistidine intermediate) is an active-site residue. Residues Arg520, Arg588, Glu690, Gly711, Ser712, Asn713, and Asp714 each coordinate substrate. Glu690 contacts Mg(2+). Asp714 contacts Mg(2+). Cys761 functions as the Proton donor in the catalytic mechanism.

Belongs to the PEP-utilizing enzyme family. Mg(2+) is required as a cofactor.

It catalyses the reaction pyruvate + ATP + H2O = phosphoenolpyruvate + AMP + phosphate + 2 H(+). It participates in carbohydrate biosynthesis; gluconeogenesis. Catalyzes the phosphorylation of pyruvate to phosphoenolpyruvate. This chain is Phosphoenolpyruvate synthase (ppsA), found in Helicobacter pylori (strain ATCC 700392 / 26695) (Campylobacter pylori).